Reading from the N-terminus, the 248-residue chain is Triosephosphate isomerase (248 aa).

2 residues coordinate substrate: Asn-10 and Lys-12. His-95 serves as the catalytic Electrophile. Glu-165 acts as the Proton acceptor in catalysis.

The protein belongs to the triosephosphate isomerase family. Homodimer.

It catalyses the reaction D-glyceraldehyde 3-phosphate = dihydroxyacetone phosphate. It participates in carbohydrate biosynthesis; gluconeogenesis. It functions in the pathway carbohydrate degradation; glycolysis; D-glyceraldehyde 3-phosphate from glycerone phosphate: step 1/1. In Eremothecium gossypii (strain ATCC 10895 / CBS 109.51 / FGSC 9923 / NRRL Y-1056) (Yeast), this protein is Triosephosphate isomerase (TPI1).